The chain runs to 361 residues: Probable S-adenosylmethionine-dependent methyltransferase At5g38780 (361 aa).

7 residues coordinate S-adenosyl-L-homocysteine: Tyr-19, Cys-64, Asn-69, Asp-106, Leu-107, Ser-135, and Phe-136. 4 residues coordinate Mg(2+): Asn-174, Glu-260, Phe-262, and Asn-263.

The protein belongs to the methyltransferase superfamily. Type-7 methyltransferase family. As to quaternary structure, homodimer. Requires Mg(2+) as cofactor.

The chain is Probable S-adenosylmethionine-dependent methyltransferase At5g38780 from Arabidopsis thaliana (Mouse-ear cress).